A 530-amino-acid chain; its full sequence is DEK domain-containing chromatin-associated protein 2 (530 aa).

Basic and acidic residues-rich tracts occupy residues 1 to 47 (MATE…AEEE) and 57 to 68 (AKEGELGEKDKE). The disordered stretch occupies residues 1–130 (MATETLDEKT…PSKSVSIEKG (130 aa)). Residues 41 to 61 (IGEAEEEKKEDEEEGEAKEGE) adopt a coiled-coil conformation. Residues 69 to 82 (DDVESEEEEEEEEG) are compositionally biased toward acidic residues. Basic and acidic residues-rich tracts occupy residues 83–93 (SGSKKSSEKET) and 100–110 (RPTRERKKVER). Positions 185–205 (EKEEEKQRARIKEKIDKCVKE) form a coiled coil. Residues 246 to 430 (IIADQEKAKK…GKAKAEPTRK (185 aa)) are disordered. Basic residues predominate over residues 253–263 (AKKRKSTPKRG). Positions 260–267 (PKRGKSGE) match the Nuclear localization signal 1 motif. Over residues 286–332 (SDTEEGKDEGDADSEGTNDPHEEDDAAPEEESDHEKTDTDDEKDEVE) the composition is skewed to acidic residues. 2 consecutive short sequence motifs (nuclear localization signal) follow at residues 343–350 (SKKTVEES) and 384–391 (AKKQKVDH). The segment covering 374-384 (KQIAKSTSSPA) has biased composition (polar residues). Positions 387-397 (QKVDHVESSKE) are enriched in basic and acidic residues. The region spanning 426–481 (EPTRKEMLEVVSKILKEVDFNTATLSDILQKLSDHFGVELSHRKPEVKDVITEAIN) is the DEK-C domain. 2 consecutive DNA-binding regions follow at residues 444–458 (DFNTATLSDILQKLS) and 473–477 (KDVIT). The interval 482-530 (AMTDDEEEDEEEEAEAGSDKEKEEVKGEEEEEKAEAESDKEKEKEEPKD) is disordered. Over residues 484–497 (TDDEEEDEEEEAEA) the composition is skewed to acidic residues. A coiled-coil region spans residues 492 to 527 (EEEAEAGSDKEKEEVKGEEEEEKAEAESDKEKEKEE). A compositionally biased stretch (basic and acidic residues) spans 516–530 (EAESDKEKEKEEPKD).

In terms of assembly, found in a mRNA splicing-dependent exon junction complex (EJC). Binds specifically histones H3 and H4.

The protein localises to the nucleus. It localises to the nucleolus. Functionally, chromatin-associated protein which contributes to the modulation of chromatin structure (such as super-helical structure of DNA) and function. Binds to chromatin of protein-coding genes throughout the genome to regulate nucleosome occupancy and chromatin accessibility, and to modulate the expression of target genes. In Arabidopsis thaliana (Mouse-ear cress), this protein is DEK domain-containing chromatin-associated protein 2.